The chain runs to 144 residues: Large ribosomal subunit protein uL11 (144 aa).

This sequence belongs to the universal ribosomal protein uL11 family. In terms of assembly, part of the ribosomal stalk of the 50S ribosomal subunit. Interacts with L10 and the large rRNA to form the base of the stalk. L10 forms an elongated spine to which L12 dimers bind in a sequential fashion forming a multimeric L10(L12)X complex. In terms of processing, one or more lysine residues are methylated.

Functionally, forms part of the ribosomal stalk which helps the ribosome interact with GTP-bound translation factors. This is Large ribosomal subunit protein uL11 from Acidiphilium cryptum (strain JF-5).